The sequence spans 546 residues: Chaperonin GroEL 2 (546 aa).

ATP is bound by residues 30 to 33 (TLGP), lysine 51, 87 to 91 (DGTTT), glycine 415, and aspartate 495.

It belongs to the chaperonin (HSP60) family. Forms a cylinder of 14 subunits composed of two heptameric rings stacked back-to-back. Interacts with the co-chaperonin GroES.

Its subcellular location is the cytoplasm. The enzyme catalyses ATP + H2O + a folded polypeptide = ADP + phosphate + an unfolded polypeptide.. In terms of biological role, together with its co-chaperonin GroES, plays an essential role in assisting protein folding. The GroEL-GroES system forms a nano-cage that allows encapsulation of the non-native substrate proteins and provides a physical environment optimized to promote and accelerate protein folding. The chain is Chaperonin GroEL 2 from Burkholderia cenocepacia (strain HI2424).